A 511-amino-acid polypeptide reads, in one-letter code: Ribose import ATP-binding protein RbsA 3 (511 aa).

2 ABC transporter domains span residues leucine 21–aspartate 257 and arginine 256–alanine 511. ATP is bound at residue glycine 53–serine 60.

The protein belongs to the ABC transporter superfamily. Ribose importer (TC 3.A.1.2.1) family. As to quaternary structure, the complex is composed of an ATP-binding protein (RbsA), two transmembrane proteins (RbsC) and a solute-binding protein (RbsB).

The protein localises to the cell inner membrane. It catalyses the reaction D-ribose(out) + ATP + H2O = D-ribose(in) + ADP + phosphate + H(+). Functionally, part of the ABC transporter complex RbsABC involved in ribose import. Responsible for energy coupling to the transport system. The sequence is that of Ribose import ATP-binding protein RbsA 3 from Rhizobium etli (strain ATCC 51251 / DSM 11541 / JCM 21823 / NBRC 15573 / CFN 42).